A 237-amino-acid chain; its full sequence is GATA zinc finger domain-containing protein 18 (237 aa).

Low complexity-rich tracts occupy residues 1–28 and 87–118; these read MAHNNNNNINNNNNNNNNNNNNNNKNNN and NTSTNTTTTTTTTTTTTTTSSPNNNVITPNSN. Disordered stretches follow at residues 1-31, 78-119, and 140-186; these read MAHNNNNNINNNNNNNNNNNNNNNKNNNSEY, PTNT…NSNL, and FEEG…GGCS. The segment covering 140–151 has biased composition (acidic residues); sequence FEEGDDEEETSS. The span at 152 to 167 shows a compositional bias: low complexity; that stretch reads DSDSSSSSSTSSSSSE. A GATA-type zinc finger spans residues 185 to 212; that stretch reads CSICKTQETPYWRKGKDGDKTVYLCNAC.

In Dictyostelium discoideum (Social amoeba), this protein is GATA zinc finger domain-containing protein 18 (gtaR).